Reading from the N-terminus, the 476-residue chain is Mitochondrial-processing peptidase subunit beta (476 aa).

Residues 1–28 constitute a mitochondrion transit peptide; it reads MASRRLALNLAQGVKARAGGVINPFRRG. Histidine 84 provides a ligand contact to Zn(2+). Catalysis depends on glutamate 87, which acts as the Proton acceptor. The Zn(2+) site is built by histidine 88 and glutamate 164.

The protein belongs to the peptidase M16 family. Heterodimer of mpp (alpha) and pep (beta) subunits, forming the mitochondrial processing protease (MPP) in which mpp is involved in substrate recognition and binding and pep is the catalytic subunit. Component of the ubiquinol-cytochrome c oxidoreductase (cytochrome b-c1 complex, complex III, CIII), a multisubunit enzyme composed of 10 subunits. The complex is composed of 3 respiratory subunits cytochrome b (cob), cytochrome c1 (cyt-1) and Rieske protein (fes-1), 2 core protein subunits pep and ucr-1, and 5 low-molecular weight protein subunits qcr6, qcr7, qcr8, qcr9 and probably NCU16844/qcr10. The complex exists as an obligatory dimer and forms supercomplexes (SCs) in the inner mitochondrial membrane with NADH-ubiquinone oxidoreductase (complex I, CI) and cytochrome c oxidase (complex IV, CIV), resulting in different assemblies (supercomplexes SCI(1)III(2), SCIII(2)IV(1) and SCIII(2)IV(2) as well as higher order I(x)III(y)IV(z) megacomplexes). Requires Zn(2+) as cofactor.

It is found in the mitochondrion matrix. The protein localises to the mitochondrion inner membrane. It catalyses the reaction Release of N-terminal transit peptides from precursor proteins imported into the mitochondrion, typically with Arg in position P2.. Its activity is regulated as follows. Binding to mpp is required for catalytic activity. Inhibited by metal chelator ethylenediaminetetraacetic acid (EDTA). In terms of biological role, catalytic subunit of the essential mitochondrial processing protease (MPP), which cleaves the mitochondrial sequence off newly imported precursors proteins. Preferentially, cleaves after an arginine at position P2. Its function is as follows. Component of the ubiquinol-cytochrome c oxidoreductase, a multisubunit transmembrane complex that is part of the mitochondrial electron transport chain which drives oxidative phosphorylation. The respiratory chain contains 3 multisubunit complexes succinate dehydrogenase (complex II, CII), ubiquinol-cytochrome c oxidoreductase (cytochrome b-c1 complex, complex III, CIII) and cytochrome c oxidase (complex IV, CIV), that cooperate to transfer electrons derived from NADH and succinate to molecular oxygen, creating an electrochemical gradient over the inner membrane that drives transmembrane transport and the ATP synthase. The cytochrome b-c1 complex catalyzes electron transfer from ubiquinol to cytochrome c, linking this redox reaction to translocation of protons across the mitochondrial inner membrane, with protons being carried across the membrane as hydrogens on the quinol. In the process called Q cycle, 2 protons are consumed from the matrix, 4 protons are released into the intermembrane space and 2 electrons are passed to cytochrome c. This is Mitochondrial-processing peptidase subunit beta from Neurospora crassa (strain ATCC 24698 / 74-OR23-1A / CBS 708.71 / DSM 1257 / FGSC 987).